Here is a 120-residue protein sequence, read N- to C-terminus: Membrane-anchored ubiquitin-fold protein 5 (120 aa).

The Ubiquitin-like domain occupies 7-72 (IELKFRLADG…ILENNKTLSE (66 aa)). The S-palmitoyl cysteine moiety is linked to residue C115. Cysteine methyl ester is present on C117. The S-geranylgeranyl cysteine moiety is linked to residue C117. Positions 118-120 (CIL) are cleaved as a propeptide — removed in mature form.

Ubiquitous.

It localises to the cell membrane. In terms of biological role, may serve as docking site to facilitate the association of other proteins to the plasma membrane. This chain is Membrane-anchored ubiquitin-fold protein 5 (MUB5), found in Arabidopsis thaliana (Mouse-ear cress).